We begin with the raw amino-acid sequence, 220 residues long: MDYAKYIDHTLLKPDATLDQIDKLIDEAKEYHFKSVCINPTYVKHAAEALKDSDVLVCTVIGFPLGANTSATKAFEVEDAVKNGADELDMIINIGALKDGRYDEVRKDIEAVVKASGDHTVKVIIETVLLTDEEKRKASEISKEAGADFVKTSTGFAGGGATVEDVKLMKEVVGDDLEVKASGGVRNLEDFKAMIDAGATRVGASAGVQIIQGLESDSDY.

The active-site Proton donor/acceptor is aspartate 89. The active-site Schiff-base intermediate with acetaldehyde is lysine 151. Lysine 180 serves as the catalytic Proton donor/acceptor.

The protein belongs to the DeoC/FbaB aldolase family. DeoC type 1 subfamily.

The protein resides in the cytoplasm. It catalyses the reaction 2-deoxy-D-ribose 5-phosphate = D-glyceraldehyde 3-phosphate + acetaldehyde. It participates in carbohydrate degradation; 2-deoxy-D-ribose 1-phosphate degradation; D-glyceraldehyde 3-phosphate and acetaldehyde from 2-deoxy-alpha-D-ribose 1-phosphate: step 2/2. Catalyzes a reversible aldol reaction between acetaldehyde and D-glyceraldehyde 3-phosphate to generate 2-deoxy-D-ribose 5-phosphate. This Staphylococcus carnosus (strain TM300) protein is Deoxyribose-phosphate aldolase.